The primary structure comprises 273 residues: Small ribosomal subunit protein uS2 (273 aa).

The protein belongs to the universal ribosomal protein uS2 family.

The chain is Small ribosomal subunit protein uS2 from Mycolicibacterium vanbaalenii (strain DSM 7251 / JCM 13017 / BCRC 16820 / KCTC 9966 / NRRL B-24157 / PYR-1) (Mycobacterium vanbaalenii).